Reading from the N-terminus, the 994-residue chain is Zinc finger protein basonuclin-1 (994 aa).

The segment at 1–29 (MRRRPPSRGGRGAARARETRRQPRHRSGR) is disordered. A hydrophobic region spans residues 240–249 (MTFMLPFQFF). 2 consecutive C2H2-type zinc fingers follow at residues 357–380 (VFCT…NAVH) and 385–414 (HKCT…PRLH). Disordered stretches follow at residues 402-425 (RNRH…RDKD) and 444-472 (TVTS…FPNI). The short motif at 533 to 539 (PKKKSRK) is the Nuclear localization signal element. A phosphoserine mark is found at Ser537 and Ser541. Positions 555–639 (NEKRHNLSSD…HNSERETEQT (85 aa)) are disordered. Residues 563–578 (SDEDMPLQVVSEDEQE) are compositionally biased toward acidic residues. Residues 603-614 (PEGERPCHRESV) show a composition bias toward basic and acidic residues. Positions 615–630 (IESSGAISQTPEQATH) are enriched in polar residues. 2 consecutive C2H2-type zinc fingers follow at residues 720–743 (FQCD…KNMH) and 748–775 (HTCT…LNLH). Positions 859–877 (STTSSMKSESSSHSSWDSD) are enriched in low complexity. The disordered stretch occupies residues 859-881 (STTSSMKSESSSHSSWDSDGVSE). 2 consecutive C2H2-type zinc fingers follow at residues 928-951 (ITCH…KTVH) and 956-983 (HKCK…PNLH). The disordered stretch occupies residues 970 to 994 (VRSRNRHSQNPNLHKSLASSPSHLQ).

In terms of assembly, interacts with HSF2BP (via C-terminus). Post-translationally, phosphorylation on Ser-537 and Ser-541 leads to cytoplasmic localization. As to expression, in epidermis, primarily detected in cells of the basal or immediately suprabasal layers (at protein level). In hair follicles, mainly expressed in the outer root sheath (at protein level). Expressed in epidermis, testis and foreskin, and to a lower extent in thymus, spleen, mammary glands, placenta, brain and heart. Expressed in the ovary, notably in oocytes.

The protein resides in the nucleus. It is found in the cytoplasm. Its subcellular location is the nucleoplasm. Functionally, transcriptional activator. It is likely involved in the regulation of keratinocytes terminal differentiation in squamous epithelia and hair follicles. Required for the maintenance of spermatogenesis. It is involved in the positive regulation of oocyte maturation, probably acting through the control of BMP15 levels and regulation of AKT signaling cascade. May also play a role in the early development of embryos. This Homo sapiens (Human) protein is Zinc finger protein basonuclin-1 (BNC1).